The chain runs to 163 residues: Type-1 angiotensin II receptor-associated protein-like (163 aa).

Residues Met-1–Leu-28 lie on the Extracellular side of the membrane. Residues Pro-29–Gln-49 form a helical membrane-spanning segment. Residues Arg-50–Ala-55 lie on the Cytoplasmic side of the membrane. A helical membrane pass occupies residues Ile-56 to Leu-76. At Tyr-77–Arg-95 the chain is on the extracellular side. The helical transmembrane segment at Phe-96–Tyr-116 threads the bilayer. The Cytoplasmic portion of the chain corresponds to His-117–Tyr-163.

The protein resides in the membrane. Functionally, appears to be a negative regulator of angiotensin II type I receptor-mediated signaling. The chain is Type-1 angiotensin II receptor-associated protein-like (agtrap) from Xenopus tropicalis (Western clawed frog).